A 269-amino-acid chain; its full sequence is Gem-associated protein 2 (269 aa).

Phosphoserine occurs at positions 70 and 155.

The protein belongs to the gemin-2 family. Monomer. Part of the core SMN complex that contains SMN1, GEMIN2/SIP1, DDX20/GEMIN3, GEMIN4, GEMIN5, GEMIN6, GEMIN7, GEMIN8 and STRAP/UNRIP. Part of the SMN-Sm complex that contains SMN1, GEMIN2/SIP1, DDX20/GEMIN3, GEMIN4, GEMIN5, GEMIN6, GEMIN7, GEMIN8, STRAP/UNRIP and the Sm proteins SNRPB, SNRPD1, SNRPD2, SNRPD3, SNRPE, SNRPF and SNRPG. Interacts with GEMIN5; the interaction is direct. Interacts (via C-terminus) with SMN1; the interaction is direct. Interacts with SNRPD1; the interaction is direct. Interacts with SNRPD2; the interaction is direct. Interacts (via N-terminus) with SNRPF; the interaction is direct. Interacts (via N-terminus) with SNRPE; the interaction is direct. Interacts (via N-terminus) with SNRPG; the interaction is direct.

The protein localises to the nucleus. It localises to the gem. The protein resides in the cytoplasm. Functionally, the SMN complex catalyzes the assembly of small nuclear ribonucleoproteins (snRNPs), the building blocks of the spliceosome, and thereby plays an important role in the splicing of cellular pre-mRNAs. Most spliceosomal snRNPs contain a common set of Sm proteins SNRPB, SNRPD1, SNRPD2, SNRPD3, SNRPE, SNRPF and SNRPG that assemble in a heptameric protein ring on the Sm site of the small nuclear RNA to form the core snRNP (Sm core). In the cytosol, the Sm proteins SNRPD1, SNRPD2, SNRPE, SNRPF and SNRPG (5Sm) are trapped in an inactive 6S pICln-Sm complex by the chaperone CLNS1A that controls the assembly of the core snRNP. To assemble core snRNPs, the SMN complex accepts the trapped 5Sm proteins from CLNS1A. Binding of snRNA inside 5Sm ultimately triggers eviction of the SMN complex, thereby allowing binding of SNRPD3 and SNRPB to complete assembly of the core snRNP. Within the SMN complex, GEMIN2 constrains the conformation of 5Sm, thereby promoting 5Sm binding to snRNA containing the snRNP code (a nonameric Sm site and a 3'-adjacent stem-loop), thus preventing progression of assembly until a cognate substrate is bound. The protein is Gem-associated protein 2 of Mus musculus (Mouse).